A 352-amino-acid polypeptide reads, in one-letter code: Fructose-1,6-bisphosphatase class 1 (352 aa).

Residues Glu-111, Asp-133, Ile-135, and Asp-136 each contribute to the Mg(2+) site. Substrate contacts are provided by residues 136–139 (DGSS), Asn-228, Tyr-256, and Lys-286. A Mg(2+)-binding site is contributed by Glu-292.

Belongs to the FBPase class 1 family. Homotetramer. Mg(2+) serves as cofactor.

The protein resides in the cytoplasm. The enzyme catalyses beta-D-fructose 1,6-bisphosphate + H2O = beta-D-fructose 6-phosphate + phosphate. Its pathway is carbohydrate biosynthesis; Calvin cycle. This chain is Fructose-1,6-bisphosphatase class 1, found in Crocosphaera subtropica (strain ATCC 51142 / BH68) (Cyanothece sp. (strain ATCC 51142)).